The following is a 212-amino-acid chain: Ribonuclease HII (212 aa).

In terms of domain architecture, RNase H type-2 spans 19 to 212; it reads CIIVGVDEVG…SKISYMFKNS (194 aa). D25, E26, and D120 together coordinate a divalent metal cation.

This sequence belongs to the RNase HII family. The cofactor is Mn(2+). It depends on Mg(2+) as a cofactor.

It localises to the cytoplasm. The enzyme catalyses Endonucleolytic cleavage to 5'-phosphomonoester.. Endonuclease that specifically degrades the RNA of RNA-DNA hybrids. This is Ribonuclease HII from Ehrlichia ruminantium (strain Welgevonden).